A 64-amino-acid chain; its full sequence is Cytochrome b-c1 complex subunit 9 (64 aa).

Residues 2–18 (SSPTIPSRLYSLLFRRT) are Mitochondrial matrix-facing. The helical transmembrane segment at 19–43 (STFALTIAVGALFFERAFDQGADAI) threads the bilayer. Residues 44 to 63 (YEHINEGKLWKHIKHKYENK) lie on the Mitochondrial intermembrane side of the membrane.

It belongs to the UQCR10/QCR9 family. In terms of assembly, component of the ubiquinol-cytochrome c oxidoreductase (cytochrome b-c1 complex, complex III, CIII), a multisubunit enzyme composed of 11 subunits. The complex is composed of 3 respiratory subunits cytochrome b, cytochrome c1 and Rieske protein UQCRFS1, 2 core protein subunits UQCRC1/QCR1 and UQCRC2/QCR2, and 6 low-molecular weight protein subunits UQCRH/QCR6, UQCRB/QCR7, UQCRQ/QCR8, UQCR10/QCR9, UQCR11/QCR10 and subunit 9, the cleavage product of Rieske protein UQCRFS1. The complex exists as an obligatory dimer and forms supercomplexes (SCs) in the inner mitochondrial membrane with NADH-ubiquinone oxidoreductase (complex I, CI) and cytochrome c oxidase (complex IV, CIV), resulting in different assemblies (supercomplex SCI(1)III(2)IV(1) and megacomplex MCI(2)III(2)IV(2)). Interacts with STMP1.

The protein localises to the mitochondrion inner membrane. Component of the ubiquinol-cytochrome c oxidoreductase, a multisubunit transmembrane complex that is part of the mitochondrial electron transport chain which drives oxidative phosphorylation. The respiratory chain contains 3 multisubunit complexes succinate dehydrogenase (complex II, CII), ubiquinol-cytochrome c oxidoreductase (cytochrome b-c1 complex, complex III, CIII) and cytochrome c oxidase (complex IV, CIV), that cooperate to transfer electrons derived from NADH and succinate to molecular oxygen, creating an electrochemical gradient over the inner membrane that drives transmembrane transport and the ATP synthase. The cytochrome b-c1 complex catalyzes electron transfer from ubiquinol to cytochrome c, linking this redox reaction to translocation of protons across the mitochondrial inner membrane, with protons being carried across the membrane as hydrogens on the quinol. In the process called Q cycle, 2 protons are consumed from the matrix, 4 protons are released into the intermembrane space and 2 electrons are passed to cytochrome c. This is Cytochrome b-c1 complex subunit 9 (Uqcr10) from Mus musculus (Mouse).